The primary structure comprises 25 residues: Large ribosomal subunit protein uL29 (25 aa).

This sequence belongs to the universal ribosomal protein uL29 family.

The chain is Large ribosomal subunit protein uL29 (rpmC) from Brevundimonas vesicularis (Pseudomonas vesicularis).